Here is a 581-residue protein sequence, read N- to C-terminus: Arginine--tRNA ligase (581 aa).

The short motif at 126–136 is the 'HIGH' region element; the sequence is PNLAKEMHVGH.

Belongs to the class-I aminoacyl-tRNA synthetase family. As to quaternary structure, monomer.

Its subcellular location is the cytoplasm. The catalysed reaction is tRNA(Arg) + L-arginine + ATP = L-arginyl-tRNA(Arg) + AMP + diphosphate. The sequence is that of Arginine--tRNA ligase from Shewanella oneidensis (strain ATCC 700550 / JCM 31522 / CIP 106686 / LMG 19005 / NCIMB 14063 / MR-1).